A 190-amino-acid polypeptide reads, in one-letter code: Shikimate kinase (190 aa).

15–20 (GSGKST) lines the ATP pocket. Ser-19 is a binding site for Mg(2+). Positions 37, 61, and 83 each coordinate substrate. ATP is bound at residue Arg-121. Substrate is bound at residue Arg-148.

Belongs to the shikimate kinase family. In terms of assembly, monomer. Requires Mg(2+) as cofactor.

The protein localises to the cytoplasm. The enzyme catalyses shikimate + ATP = 3-phosphoshikimate + ADP + H(+). The protein operates within metabolic intermediate biosynthesis; chorismate biosynthesis; chorismate from D-erythrose 4-phosphate and phosphoenolpyruvate: step 5/7. Its function is as follows. Catalyzes the specific phosphorylation of the 3-hydroxyl group of shikimic acid using ATP as a cosubstrate. In Chlorobium chlorochromatii (strain CaD3), this protein is Shikimate kinase.